We begin with the raw amino-acid sequence, 198 residues long: Nucleoid occlusion factor SlmA (198 aa).

The HTH tetR-type domain occupies 10–70 (NRREEILQSL…SLIEFIEDSL (61 aa)). The segment at residues 33-52 (TTAKLAASVGVSEAALYRHF) is a DNA-binding region (H-T-H motif). Residues 117–145 (EQDRLQGRINQLFERIEAQLRQVMREKKM) are a coiled coil.

Belongs to the nucleoid occlusion factor SlmA family. As to quaternary structure, homodimer. Interacts with FtsZ.

It is found in the cytoplasm. It localises to the nucleoid. In terms of biological role, required for nucleoid occlusion (NO) phenomenon, which prevents Z-ring formation and cell division over the nucleoid. Acts as a DNA-associated cell division inhibitor that binds simultaneously chromosomal DNA and FtsZ, and disrupts the assembly of FtsZ polymers. SlmA-DNA-binding sequences (SBS) are dispersed on non-Ter regions of the chromosome, preventing FtsZ polymerization at these regions. In Klebsiella pneumoniae subsp. pneumoniae (strain ATCC 700721 / MGH 78578), this protein is Nucleoid occlusion factor SlmA.